The following is a 335-amino-acid chain: Beta-ketoacyl-[acyl-carrier-protein] synthase III (335 aa).

Catalysis depends on residues C119 and H261. The interval 262-266 (QANQR) is ACP-binding. N291 is a catalytic residue.

It belongs to the thiolase-like superfamily. FabH family. As to quaternary structure, homodimer.

It is found in the cytoplasm. It catalyses the reaction malonyl-[ACP] + acetyl-CoA + H(+) = 3-oxobutanoyl-[ACP] + CO2 + CoA. It participates in lipid metabolism; fatty acid biosynthesis. Its function is as follows. Catalyzes the condensation reaction of fatty acid synthesis by the addition to an acyl acceptor of two carbons from malonyl-ACP. Catalyzes the first condensation reaction which initiates fatty acid synthesis and may therefore play a role in governing the total rate of fatty acid production. Possesses both acetoacetyl-ACP synthase and acetyl transacylase activities. Its substrate specificity determines the biosynthesis of branched-chain and/or straight-chain of fatty acids. The polypeptide is Beta-ketoacyl-[acyl-carrier-protein] synthase III (Prochlorococcus marinus (strain MIT 9301)).